The chain runs to 586 residues: Ezrin (586 aa).

In terms of domain architecture, FERM spans 2–296 (PKPINVRVTT…NHELYMRRRK (295 aa)). Lys60 bears the N6-acetyllysine mark. Residues 115 to 120 (IYCPPE) carry the [IL]-x-C-x-x-[DE] motif motif. Tyr146 is subject to Phosphotyrosine; by PDGFR. The segment at 244 to 586 (EIRNISFNDK…KQRIDEFEAL (343 aa)) is interaction with SCYL3. A coiled-coil region spans residues 302-462 (VQQMKAQARE…QDDLVKTKEE (161 aa)). Residues 306–341 (KAQAREEKHQKQLERQQLETEKKRRETVEREKEQMM) are disordered. The segment covering 308-341 (QAREEKHQKQLERQQLETEKKRRETVEREKEQMM) has biased composition (basic and acidic residues). Tyr354 is subject to Phosphotyrosine; by PDGFR. Ser366 bears the Phosphoserine mark. Residue Tyr478 is modified to Phosphotyrosine. A disordered region spans residues 485-564 (VQESLQDEGA…NENMRQGRDK (80 aa)). Residues 507–528 (GIRDDRNEEKRITEAEKNERVQ) show a composition bias toward basic and acidic residues. Positions 530 to 539 (QLLTLSSELS) are enriched in polar residues. Ser535 is modified (phosphoserine). Residues 540–564 (QARDENKRTHNDIIHNENMRQGRDK) are compositionally biased toward basic and acidic residues. Thr567 carries the post-translational modification Phosphothreonine; by ROCK2 and PKC/PRKCI.

As to quaternary structure, monomer. Homodimer. Interacts with PALS1 and NHERF2. Found in a complex with EZR, PODXL and NHERF2. Interacts with MCC, PLEKHG6, PODXL, SCYL3/PACE1, NHERF1 and TMEM8B. Interacts (when phosphorylated) with FES/FPS. Interacts with dimeric S100P, the interaction may be activating through unmasking of F-actin binding sites. Identified in complexes that contain VIM, EZR, AHNAK, BFSP1, BFSP2, ANK2, PLEC, PRX and spectrin. Detected in a complex composed of at least EZR, AHNAK, PPL and PRX. Interacts with PDPN (via cytoplasmic domain); activates RHOA and promotes epithelial-mesenchymal transition. Interacts with SPN/CD43 cytoplasmic tail, CD44 and ICAM2. Interacts with SLC9A3; interaction targets SLC9A3 to the apical membrane. Interacts with SLC9A1; regulates interactions of SLC9A1 with cytoskeletal and promotes stress fiber formation. Interacts with CLIC5; may work together in a complex which also includes RDX and MYO6 to stabilize linkages between the plasma membrane and subjacent actin cytoskeleton at the base of stereocilia. In terms of processing, phosphorylated by tyrosine-protein kinases. Phosphorylation by ROCK2 suppresses the head-to-tail association of the N-terminal and C-terminal halves resulting in an opened conformation which is capable of actin and membrane-binding. S-nitrosylation is induced by interferon-gamma and oxidatively-modified low-densitity lipoprotein (LDL(ox)) possibly implicating the iNOS-S100A8/9 transnitrosylase complex. Expressed in cerebral cortex, basal ganglia, hippocampus, hypophysis, and optic nerve. Weakly expressed in brain stem and diencephalon. Stronger expression was detected in gray matter of frontal lobe compared to white matter (at protein level). Component of the microvilli of intestinal epithelial cells. Preferentially expressed in astrocytes of hippocampus, frontal cortex, thalamus, parahippocampal cortex, amygdala, insula, and corpus callosum. Not detected in neurons in most tissues studied.

Its subcellular location is the apical cell membrane. The protein resides in the cell projection. It is found in the microvillus membrane. It localises to the ruffle membrane. The protein localises to the cytoplasm. Its subcellular location is the cell cortex. The protein resides in the cytoskeleton. It is found in the microvillus. With respect to regulation, a head-to-tail association, of the N-terminal and C-terminal halves results in a closed conformation (inactive form) which is incapable of actin or membrane-binding. Probably involved in connections of major cytoskeletal structures to the plasma membrane. In epithelial cells, required for the formation of microvilli and membrane ruffles on the apical pole. Along with PLEKHG6, required for normal macropinocytosis. In Homo sapiens (Human), this protein is Ezrin (EZR).